Reading from the N-terminus, the 452-residue chain is Scaffold protein ILK (452 aa).

Met-1 is subject to N-acetylmethionine. ANK repeat units lie at residues 2–30, 31–63, 64–96, 97–129, and 130–174; these read DDIFTQCREGNAVAVRLWLDNTENDLNQG, DDHGFSPLHWACREGRSAVVEMLIMRGARINVM, NRGDDTPLHLAASHGHRDIVQKLLQYKADINAV, NEHGNVPLHYACFWGQDQVAEDLVANGALVSIC, and NKYG…GTTR. The tract at residues 33 to 139 is interaction with LIMS1; that stretch reads HGFSPLHWAC…NKYGEMPVDK (107 aa). Thr-173 carries the phosphothreonine modification. Residues 180–212 are PH-like; mediates interaction with TGFB1I1; it reads GTLNKHSGIDFKQLNFLAKLNENHSGELWKGRW. Phosphoserine is present on Ser-186. The Protein kinase domain maps to 193 to 446; the sequence is LNFLAKLNEN…PKFDMIVPIL (254 aa). ATP is bound by residues Asn-200, Asn-202, His-203, and Ser-204. The residue at position 246 (Ser-246) is a Phosphoserine. The ATP site is built by His-270, Met-272, and Asn-279. Asp-339 provides a ligand contact to Mg(2+). Lys-341 is an ATP binding site. The Nuclear localization signal motif lies at 363–371; that stretch reads KKPEDTNRR. N6-acetyllysine is present on Lys-426.

This sequence belongs to the protein kinase superfamily. TKL Ser/Thr protein kinase family. Component of the heterotrimeric IPP (ILK-PINCH-PARVIN) complex composed of ILK, LIMS1/PINCH and PARVA; the complex binds to F-actin via the C-terminal tail of LIMS1 and the N-terminal region of PARVA, promoting F-actin filament bundling. Formation of the IPP complex is dependent on protein kinase C and precedes integrin-mediated cell adhesion and spreading. ILK also interacts with LIMS2/PINCH2 and with PARVB and PARVG which may substitute for LIMS1 and PARVA in the IPP complex; PARVA and PARVB compete for the same binding site. Interaction with PARVG promotes the establishment of cell polarity required for leukocyte migration. Interacts with the cytoplasmic domain of integrin ITGB1 and may also interact with integrins ITGB2, ITGB3 and/or ITGB5. Interacts probably also with TGFB1I1. Interacts (via ANK repeats) with EPHA1 (via SAM domain); stimulated by EFNA1 but independent of the kinase activity of EPHA1. Interacts with FERMT2. Interacts with LIMD2; leading to activate the protein kinase activity. Interacts with PXN/PAXILLIN (via LD motif 4). Interacts with CCDC25 (via cytoplasmic region); initiating the ILK-PARVB cascade to induce cytoskeleton rearrangement and directional migration of cells. Interacts with IQGAP1; the interaction is required for localization of IQGAP1 to the cell cortex. In terms of processing, phosphorylation by PAK1 modulates ILK subcellular location by promoting its nuclear export. As to expression, highly expressed in lung, heart, kidney, liver, brain, spleen and skeletal muscle. Weakly expressed in testis.

The protein resides in the cell junction. It localises to the focal adhesion. It is found in the cell membrane. Its subcellular location is the cytoplasm. The protein localises to the myofibril. The protein resides in the sarcomere. It localises to the cell projection. It is found in the lamellipodium. Its subcellular location is the nucleus. The protein localises to the cytoskeleton. The protein resides in the microtubule organizing center. It localises to the centrosome. It is found in the cell cortex. Functionally, scaffold protein which mediates protein-protein interactions during a range of cellular events including focal adhesion assembly, cell adhesion and cell migration. Regulates integrin-mediated signal transduction by contributing to inside-out integrin activation. Recruits PARVA and LIMS1/PITCH to form the heterotrimeric IPP (ILK-PINCH-PARVIN) complex which binds to F-actin via the C-terminal tail of LIMS1 and the N-terminal region of PARVA, promoting F-actin filament bundling, a process required to generate force for actin cytoskeleton reorganization and subsequent dynamic cell adhesion events such as cell spreading and migration. Binding to PARVA promotes effective assembly of ILK into focal adhesions while PARVA-bound ILK can simultaneously engage integrin-beta cytoplasmic tails to mediate cell adhesion. Plays a role with PARVG in promoting the cell adhesion and spreading of leukocytes. Acts as an upstream effector of both AKT1/PKB and GSK3. Mediates trafficking of caveolae to the cell surface in an ITGB1-dependent manner by promoting the recruitment of IQGAP1 to the cell cortex which cooperates with its effector DIAPH1 to locally stabilize microtubules and allow stable insertion of caveolae into the plasma membrane. Required for the maintenance of mitotic spindle integrity by promoting phosphorylation of TACC3 by AURKA. Associates with chromatin and may act as a negative regulator of transcription when located in the nucleus. In Mus musculus (Mouse), this protein is Scaffold protein ILK.